Here is a 350-residue protein sequence, read N- to C-terminus: MSTVQTVLGSITPNLLGRTLTHEHVALDFEHFYRPPPPDFESELKAKISMSTLGYVRLYPYSSKENVRFYDEEALEAAKKDILLYKKHGGGSIVENSSYGLKRNLEIIVELAKSTGVHFIAGTGHYIHAMQDARNASLTVEQLSDLYSKDIITGLEVNGKMVKCGFIGEVASVYPIHDFEKHCIKAAGEIQEVLGCGVSMHPHRVTKAPFEIMRLYLEAGGRADKCVMSHLDRTIFDVDELLEFAKLGCYIQYDLFGTECSFYQLNTSVDMISDGQRIDNLMKLINEGLVDKLLMSHDIHTKHRLTSYGGHGYHHIYTNILPRMFARGVTVEQVEQMTVTNPANWLAFNP.

6 residues coordinate a divalent metal cation: His22, His24, Glu169, His201, His230, and Asp298.

This sequence belongs to the metallo-dependent hydrolases superfamily. Phosphotriesterase family. It depends on a divalent metal cation as a cofactor.

This Drosophila ananassae (Fruit fly) protein is Phosphotriesterase-related protein.